The sequence spans 646 residues: DNA mismatch repair protein MutL (646 aa).

Disordered regions lie at residues 356–380 and 415–452; these read FENR…NENS and TKNS…AKPH. A compositionally biased stretch (low complexity) spans 424 to 436; sequence SEATSNEAASAEI.

It belongs to the DNA mismatch repair MutL/HexB family.

Functionally, this protein is involved in the repair of mismatches in DNA. It is required for dam-dependent methyl-directed DNA mismatch repair. May act as a 'molecular matchmaker', a protein that promotes the formation of a stable complex between two or more DNA-binding proteins in an ATP-dependent manner without itself being part of a final effector complex. This is DNA mismatch repair protein MutL from Staphylococcus carnosus (strain TM300).